The chain runs to 700 residues: Polyphosphate kinase (700 aa).

Asn-45 lines the ATP pocket. 2 residues coordinate Mg(2+): Arg-373 and Arg-403. In terms of domain architecture, PLD phosphodiesterase 1 spans 428–462 (PGMKIHAKLLLITRREEQGFVRYAHIGTGNFHERT). His-433 acts as the Phosphohistidine intermediate in catalysis. Residues Tyr-466, Arg-562, and His-590 each coordinate ATP. Residues 585–615 (DRFLEHPRVLVVHNDGDPQVFISSADWMERN) enclose the PLD phosphodiesterase 2 domain.

It belongs to the polyphosphate kinase 1 (PPK1) family. The cofactor is Mg(2+). In terms of processing, an intermediate of this reaction is the autophosphorylated ppk in which a phosphate is covalently linked to a histidine residue through a N-P bond.

It catalyses the reaction [phosphate](n) + ATP = [phosphate](n+1) + ADP. Catalyzes the reversible transfer of the terminal phosphate of ATP to form a long-chain polyphosphate (polyP). This Vibrio vulnificus (strain YJ016) protein is Polyphosphate kinase.